Reading from the N-terminus, the 807-residue chain is Hyaluronate lyase (807 aa).

The N-terminal stretch at 1-40 (MTYRIKKWQKLSTITLLMAGVITLNGGEFRSVDKHQIAVA) is a signal peptide. Catalysis depends on residues N241, H297, and Y306.

This sequence belongs to the polysaccharide lyase 8 family.

It localises to the secreted. The catalysed reaction is [hyaluronan](n) = n 3-(4-deoxy-beta-D-gluc-4-enuronosyl)-N-acetyl-D-glucosamine + H2O. This Staphylococcus aureus (strain NCTC 8325 / PS 47) protein is Hyaluronate lyase.